A 695-amino-acid polypeptide reads, in one-letter code: NADPH--cytochrome P450 reductase (695 aa).

The Lumenal portion of the chain corresponds to 1 to 8; the sequence is MAQLDTLD. A helical membrane pass occupies residues 9 to 31; the sequence is VVVLAVLLAGSIAYFTKGTFWAV. Residues 32–695 are Cytoplasmic-facing; sequence AKDPYASSGP…SGSYQEDVWS (664 aa). The 156-residue stretch at 66 to 221 folds into the Flavodoxin-like domain; sequence CVIFYGSQTG…DFLAWKEPMW (156 aa). FMN-binding positions include 72–77, 123–126, 169–178, and aspartate 204; these read SQTGTA, ATYG, and LGNNTYEHYN. The FAD-binding FR-type domain maps to 277–538; sequence HNPYIAPIVE…HVRHSNFKLP (262 aa). Arginine 296 serves as a coordination point for NADP(+). FAD is bound by residues 451–454, 469–471, and 486–489; these read RYYS, TAV, and GVTT. Positions 497-516 are disordered; it reads QKQNGDPSPDPHGQTYAING. NADP(+) is bound by residues threonine 552, 614-615, 620-624, and glutamate 656; these read SR and KVYVQ. Tryptophan 694 contacts FAD.

This sequence belongs to the NADPH--cytochrome P450 reductase family. The protein in the N-terminal section; belongs to the flavodoxin family. In the C-terminal section; belongs to the flavoprotein pyridine nucleotide cytochrome reductase family. FAD is required as a cofactor. FMN serves as cofactor.

It is found in the endoplasmic reticulum membrane. The protein resides in the mitochondrion outer membrane. Its subcellular location is the cell membrane. It carries out the reaction 2 oxidized [cytochrome P450] + NADPH = 2 reduced [cytochrome P450] + NADP(+) + H(+). In terms of biological role, this enzyme is required for electron transfer from NADP to cytochrome P450 in microsomes. It can also provide electron transfer to heme oxygenase and cytochrome B5. Involved in ergosterol biosynthesis. The polypeptide is NADPH--cytochrome P450 reductase (Emericella nidulans (strain FGSC A4 / ATCC 38163 / CBS 112.46 / NRRL 194 / M139) (Aspergillus nidulans)).